A 683-amino-acid chain; its full sequence is Protein kinase C eta type (683 aa).

In terms of domain architecture, C2 spans 1–118 (MSSGTMKFNG…LRTTGASDTF (118 aa)). Phosphoserine; by autocatalysis occurs at positions 28 and 32. 2 Phorbol-ester/DAG-type zinc fingers span residues 171 to 222 (GHKF…VTAC) and 245 to 295 (PHKF…APNC). Ser-317 bears the Phosphoserine mark. Residues 320–342 (SKLVSRSTLRRQGKESSKEGNGI) form a disordered region. A Protein kinase domain is found at 355–614 (FEFIRVLGKG…EHAILRHPFF (260 aa)). Residues 361–369 (LGKGSFGKV) and Lys-384 each bind ATP. Asp-479 serves as the catalytic Proton acceptor. Thr-513 is modified (phosphothreonine; by PDPK1). Positions 615–683 (KEIDWAQLNH…FSYVSPELQP (69 aa)) constitute an AGC-kinase C-terminal domain. At Thr-656 the chain carries Phosphothreonine. Ser-675 carries the phosphoserine modification.

The protein belongs to the protein kinase superfamily. AGC Ser/Thr protein kinase family. PKC subfamily. Interacts with FYN. Interacts with RALA. Interacts with DGKQ. Interacts with PRKCH upstream open reading frame 2; the interaction leads to inhibition of kinase activity. In terms of tissue distribution, most abundant in lung, less in heart and skin.

Its subcellular location is the cytoplasm. The enzyme catalyses L-seryl-[protein] + ATP = O-phospho-L-seryl-[protein] + ADP + H(+). The catalysed reaction is L-threonyl-[protein] + ATP = O-phospho-L-threonyl-[protein] + ADP + H(+). With respect to regulation, novel PKCs (PRKCD, PRKCE, PRKCH and PRKCQ) are calcium-insensitive, but activated by diacylglycerol (DAG) and phosphatidylserine. Three specific sites; Thr-513 (activation loop of the kinase domain), Thr-656 (turn motif) and Ser-675 (hydrophobic region), need to be phosphorylated for its full activation. Inhibited by PRKCH upstream open reading frame 2. Calcium-independent, phospholipid- and diacylglycerol (DAG)-dependent serine/threonine-protein kinase that is involved in the regulation of cell differentiation in keratinocytes and pre-B cell receptor, mediates regulation of epithelial tight junction integrity and foam cell formation, and is required for glioblastoma proliferation and apoptosis prevention in MCF-7 cells. In keratinocytes, binds and activates the tyrosine kinase FYN, which in turn blocks epidermal growth factor receptor (EGFR) signaling and leads to keratinocyte growth arrest and differentiation. Associates with the cyclin CCNE1-CDK2-CDKN1B complex and inhibits CDK2 kinase activity, leading to RB1 dephosphorylation and thereby G1 arrest in keratinocytes. In association with RALA activates actin depolymerization, which is necessary for keratinocyte differentiation. In the pre-B cell receptor signaling, functions downstream of BLNK by up-regulating IRF4, which in turn activates L chain gene rearrangement. Regulates epithelial tight junctions (TJs) by phosphorylating occludin (OCLN) on threonine residues, which is necessary for the assembly and maintenance of TJs. In association with PLD2 and via TLR4 signaling, is involved in lipopolysaccharide (LPS)-induced RGS2 down-regulation and foam cell formation. Upon PMA stimulation, mediates glioblastoma cell proliferation by activating the mTOR pathway, the PI3K/AKT pathway and the ERK1-dependent phosphorylation of ELK1. Involved in the protection of glioblastoma cells from irradiation-induced apoptosis by preventing caspase-9 activation. In camptothecin-treated MCF-7 cells, regulates NF-kappa-B upstream signaling by activating IKBKB, and confers protection against DNA damage-induced apoptosis. Promotes oncogenic functions of ATF2 in the nucleus while blocking its apoptotic function at mitochondria. Phosphorylates ATF2 which promotes its nuclear retention and transcriptional activity and negatively regulates its mitochondrial localization. This is Protein kinase C eta type (PRKCH) from Homo sapiens (Human).